We begin with the raw amino-acid sequence, 461 residues long: uncharacterized protein (461 aa).

The next 13 membrane-spanning stretches (helical) occupy residues 13–33 (GIIF…LPFE), 54–74 (ALHV…LGLV), 81–101 (VGFA…ATAL), 120–140 (GNLF…SMWM), 170–190 (VFVL…TLVG), 211–231 (YGLP…YIIF), 256–276 (FIIF…NPFI), 286–306 (IASF…STGV), 314–334 (SNTD…SAVL), 349–369 (FMID…FIIF), 377–397 (TASA…LGMP), 399–419 (IGLA…PVAT), and 439–459 (VGFL…YMFW).

It belongs to the SLC13A/DASS transporter (TC 2.A.47) family. NADC subfamily.

Its subcellular location is the cell membrane. This is an uncharacterized protein from Haemophilus influenzae (strain ATCC 51907 / DSM 11121 / KW20 / Rd).